The sequence spans 865 residues: MATLSSLRHLIQTHPLIDNHAHNLLSQSAACKYAKYPFEQIISEAQGVALANAPSTLSFHRAASQLATLYQSSSSDWDSVRAARDQSVQRDYEGLIRKCLEGTQVLLLDDLLTENDVELFDWHDRFTASATKRIVRIEALAASVLSQIVHGGPVPQDSSDLSAFQTLWESFSRNFSALVSDAIADPAVVGFKSVICYRTGLDVQPTDDRDTERLIRSFARTISQAAVSTPRVEDKPLNDWLVRQTLNLLKAAKVTQPNKPLQLHTGLGDNDINLLKSNPAHLQSLIAQYPEVDFVLLHSSYPYTREAGYLACVYPNVYLDLGEVFPMVSRDAQESILRESLEIVPSTRLLWSTDGHFFPETFWLANRQFRDALEKVFVDYVQNGDYTIEQAMQAAADILFHNSNRLYELNEQPPSAALSSGHQTVSRISSTDLLEKFIRSNPGVKYVWTQFIDYTATVRVRMFPVMEFAKIVRKQRRLGISMATFWMLQDDEVVGGSTTGQFYLIPDLSTLSPNVGIDSKSATVMTWWKSEQGESLEECPRTNLLNINNKLKDEFGIQATCGFEIEVVFLKPTTDPSTGEEDWAPSVTNHSWSQMTRETRRMLPLLEEIAETLASIGIHLQQFHAESAPGQFEFILPPDNPVAAVDTLIKSRQVIANIVEKHGLRATLYPRPYPSAAGTASHAHVSISPSTKEESFLAGVLQHYPAVLAFTLSGDASYDRVKSGIWAGSEWVTWGTQNREAPIRKISPGHWEIKSLDGLANMYLAMAAFLAAGYTGVKENLPLTIKDCPYDAASLPESERAALGITTKLPNTLAKSLAALESDEILRSLLGENLVEDYIIVKRAESKKLSAMDEKARRKWLVERY.

One can recognise a GS beta-grasp domain in the interval proline 442–glycine 533. In terms of domain architecture, GS catalytic spans proline 540–tyrosine 865.

This sequence belongs to the glutamine synthetase family.

The protein resides in the cytoplasm. Functionally, may function as a GSI-related enzyme in synthesizing a small diffusible factor that acts as an extracellular signal directing asexual sporulation and perhaps other aspects of colony growth. May be involved in brlA activation (an early transcriptional regulator for conidiation specific gene). The protein is Protein fluG (fluG) of Emericella nidulans (strain FGSC A4 / ATCC 38163 / CBS 112.46 / NRRL 194 / M139) (Aspergillus nidulans).